The following is a 601-amino-acid chain: Transcription factor Ken (601 aa).

Positions A33–S101 constitute a BTB domain. Disordered stretches follow at residues A188–P276, L331–P365, and D471–N491. Basic and acidic residues-rich tracts occupy residues E190–K200 and C207–K216. Positions N223–G234 are enriched in polar residues. Residues S235–Q247 show a composition bias toward low complexity. Basic residues predominate over residues Q248–H258. Positions N259–N275 are enriched in low complexity. The span at R476–S490 shows a compositional bias: low complexity. 3 C2H2-type zinc fingers span residues Y500 to H522, F528 to H551, and Y567 to H590.

In terms of tissue distribution, expressed from stage 5 in two rather faint stripes at positions of 64% (anterior domain; AD) and 17% (posterior domain; PD) egg length. During early gastrulation, at stage 6, these two stripes become more evident and detectable at the region posterior to the cephalic furrow and in the hindgut primordium. The AD disappears as gastrulation proceeds, while the PD remains. At stage 15, the AD appears again in the foregut, and PD expression in the hindgut and anal pad. In imaginal disks, it is ubiquitously expressed in both males and females in genital and eye-antennal disks. Not expressed in the brain. In genital disks, it is expressed along the margin of the anterior bulbus in males, while in females it is expressed in the posterior compartment along the anterior-posterior border, with medial expansion in the most posterior region.

It is found in the nucleus. Transcription factor required for terminalia development. Negative regulator of the JAK/STAT pathway: represses JAK/STAT-dependent expression of ventral veins lacking (vvl) in the posterior spiracles. This Drosophila melanogaster (Fruit fly) protein is Transcription factor Ken (ken).